The primary structure comprises 318 residues: DNA-directed RNA polymerase subunit alpha (318 aa).

Positions 1–227 are alpha N-terminal domain (alpha-NTD); sequence MTQFEIECLD…NLFSPLKTID (227 aa). The segment at 241-318 is alpha C-terminal domain (alpha-CTD); the sequence is HINQILIEEL…KEKTTKIYNK (78 aa).

Belongs to the RNA polymerase alpha chain family. In terms of assembly, in plastids the minimal PEP RNA polymerase catalytic core is composed of four subunits: alpha, beta, beta', and beta''. When a (nuclear-encoded) sigma factor is associated with the core the holoenzyme is formed, which can initiate transcription.

The protein resides in the plastid. Its subcellular location is the chloroplast. The catalysed reaction is RNA(n) + a ribonucleoside 5'-triphosphate = RNA(n+1) + diphosphate. Functionally, DNA-dependent RNA polymerase catalyzes the transcription of DNA into RNA using the four ribonucleoside triphosphates as substrates. This is DNA-directed RNA polymerase subunit alpha from Guillardia theta (Cryptophyte).